A 339-amino-acid chain; its full sequence is Protoheme IX farnesyltransferase (339 aa).

Residues 1 to 27 (MTVADPRLTDAPAHSRTSLLGRRRGGR) are disordered. A run of 9 helical transmembrane segments spans residues 45 to 65 (IVEL…GGLP), 67 to 87 (GWLI…ANTL), 117 to 136 (ALVF…VAFV), 140 to 159 (SAAL…TLLL), 165 to 185 (QNIV…WTAV), 191 to 211 (WAPF…YWPL), 236 to 256 (VSRQ…LLVP), 257 to 277 (LGGA…GFLV), and 309 to 329 (PMGV…AVAV).

This sequence belongs to the UbiA prenyltransferase family. Protoheme IX farnesyltransferase subfamily.

It is found in the cell membrane. The catalysed reaction is heme b + (2E,6E)-farnesyl diphosphate + H2O = Fe(II)-heme o + diphosphate. The protein operates within porphyrin-containing compound metabolism; heme O biosynthesis; heme O from protoheme: step 1/1. Functionally, converts heme B (protoheme IX) to heme O by substitution of the vinyl group on carbon 2 of heme B porphyrin ring with a hydroxyethyl farnesyl side group. This chain is Protoheme IX farnesyltransferase, found in Kineococcus radiotolerans (strain ATCC BAA-149 / DSM 14245 / SRS30216).